The sequence spans 156 residues: Large ribosomal subunit protein uL15 (156 aa).

Residues 25-48 (RGIGCGKGKTSGRGHKGQKARSGV) form a disordered region. Over residues 34-43 (TSGRGHKGQK) the composition is skewed to basic residues.

It belongs to the universal ribosomal protein uL15 family. In terms of assembly, part of the 50S ribosomal subunit.

Its function is as follows. Binds to the 23S rRNA. In Wolbachia pipientis wMel, this protein is Large ribosomal subunit protein uL15.